Here is a 367-residue protein sequence, read N- to C-terminus: Voltage-gated potassium channel subunit beta-2 (367 aa).

Residues S9, S14, and S20 each carry the phosphoserine modification. R28 carries the asymmetric dimethylarginine; alternate modification. R28 carries the omega-N-methylarginine; alternate modification. Position 31 is a phosphoserine (S31). 4 residues coordinate NADP(+): T56, W57, Q63, and D85. The active-site Proton donor/acceptor is Y90. S112 is subject to Phosphoserine. The residue at position 124 (K124) is an N6-acetyllysine. Residues N158, S188, R189, Q214, W243, S244, P245, L246, A247, C248, K254, Y262, R264, G323, S325, Q329, E332, and N333 each contribute to the NADP(+) site.

The protein belongs to the shaker potassium channel beta subunit family. Homotetramer. Interaction with tetrameric potassium channel alpha subunits gives rise to a heterooctamer. Identified in potassium channel complexes containing KCNA1, KCNA2, KCNA4, KCNA5, KCNA6, KCNAB1, KCNAB2 and KCND3. Interacts (in unphosphorylated form) with MAPRE1. Forms a ternary complex with SQSTM1 and PRKCZ. In terms of processing, phosphorylated by PRKCZ; may be regulated by incorporation in a complex composed of PRKCZ and SQSTM1. Detected in the juxtaparanodal region of nodes of Ranvier in myelinated nerve fibers in the spinal cord (at protein level).

The protein localises to the cytoplasm. The protein resides in the membrane. It localises to the cell membrane. Its subcellular location is the cell projection. It is found in the axon. The protein localises to the synapse. The protein resides in the synaptosome. It localises to the cytoskeleton. It carries out the reaction hydroxyacetone + NADP(+) = methylglyoxal + NADPH + H(+). It catalyses the reaction (E)-4-oxonon-2-en-1-ol + NADP(+) = (E)-4-oxonon-2-enal + NADPH + H(+). Its function is as follows. Regulatory subunit of the voltage-gated potassium (Kv) Shaker channels composed of pore-forming and potassium-conducting alpha subunits and of regulatory beta subunits. The beta-2/KCNAB2 cytoplasmic subunit promotes potassium channel closure via a mechanism that does not involve physical obstruction of the channel pore. Promotes the inactivation of Kv1.4/KCNA4 and Kv1.5/KCNA5 alpha subunit-containing channels. Displays nicotinamide adenine dinucleotide phosphate (NADPH)-dependent aldoketoreductase activity by catalyzing the NADPH-dependent reduction of a wide range of aldehyde and ketone substrates. Substrate specificity includes methylglyoxal, 9,10-phenanthrenequinone, prostaglandin J2, 4-nitrobenzaldehyde, 4-nitroacetophenone and 4-oxo-trans-2-nonenal (in vitro, no physiological substrate identified yet). The binding of oxidized and reduced nucleotide alters Kv channel gating and may contribute to dynamic fine tuning of cell excitability. Contributes to the regulation of nerve signaling, and prevents neuronal hyperexcitability. The chain is Voltage-gated potassium channel subunit beta-2 (KCNAB2) from Bos taurus (Bovine).